The following is a 490-amino-acid chain: Inosine-5'-monophosphate dehydrogenase (490 aa).

CBS domains lie at 96–154 (MIIN…SKPV) and 158–218 (MTKE…CKDE). NAD(+)-binding positions include Asp252 and 302 to 304 (GVG). Residues Gly304 and Gly306 each coordinate K(+). Ser307 lines the IMP pocket. Cys309 serves as a coordination point for K(+). The Thioimidate intermediate role is filled by Cys309. Residues 342–344 (DGG), 365–366 (GN), and 389–393 (YRGMG) each bind IMP. Catalysis depends on Arg406, which acts as the Proton acceptor. Glu418 lines the IMP pocket. K(+) is bound by residues Glu472, Ser473, and His474.

This sequence belongs to the IMPDH/GMPR family. As to quaternary structure, homotetramer. It depends on K(+) as a cofactor.

It catalyses the reaction IMP + NAD(+) + H2O = XMP + NADH + H(+). It functions in the pathway purine metabolism; XMP biosynthesis via de novo pathway; XMP from IMP: step 1/1. Its activity is regulated as follows. Mycophenolic acid (MPA) is a non-competitive inhibitor that prevents formation of the closed enzyme conformation by binding to the same site as the amobile flap. In contrast, mizoribine monophosphate (MZP) is a competitive inhibitor that induces the closed conformation. MPA is a potent inhibitor of mammalian IMPDHs but a poor inhibitor of the bacterial enzymes. MZP is a more potent inhibitor of bacterial IMPDH. In terms of biological role, catalyzes the conversion of inosine 5'-phosphate (IMP) to xanthosine 5'-phosphate (XMP), the first committed and rate-limiting step in the de novo synthesis of guanine nucleotides, and therefore plays an important role in the regulation of cell growth. This chain is Inosine-5'-monophosphate dehydrogenase, found in Aquifex aeolicus (strain VF5).